The primary structure comprises 603 residues: Adenine deaminase 1 (603 aa).

It belongs to the metallo-dependent hydrolases superfamily. Adenine deaminase family. The cofactor is Mn(2+).

The catalysed reaction is adenine + H2O + H(+) = hypoxanthine + NH4(+). This Carboxydothermus hydrogenoformans (strain ATCC BAA-161 / DSM 6008 / Z-2901) protein is Adenine deaminase 1.